Reading from the N-terminus, the 441-residue chain is GPI mannosyltransferase 2 (441 aa).

The next 10 membrane-spanning stretches (helical) occupy residues 4-24 (MTVL…LILV), 35-55 (ILFG…PGLG), 115-135 (LLAL…IFGG), 143-163 (LCFL…LSAP), 165-185 (GEAL…SSVL), 199-223 (LLAA…GVLF), 249-269 (VIVL…YIAF), 306-326 (YWVV…ALLL), 361-381 (LAII…VQII), and 418-438 (VAVQ…GSFL).

Belongs to the PIGV family.

Its subcellular location is the endoplasmic reticulum membrane. It functions in the pathway glycolipid biosynthesis; glycosylphosphatidylinositol-anchor biosynthesis. Mannosyltransferase involved in glycosylphosphatidylinositol-anchor biosynthesis. Transfers the second mannose to the glycosylphosphatidylinositol during GPI precursor assembly. This Aspergillus fumigatus (strain ATCC MYA-4609 / CBS 101355 / FGSC A1100 / Af293) (Neosartorya fumigata) protein is GPI mannosyltransferase 2 (gpi18).